The chain runs to 417 residues: 3-isopropylmalate dehydratase large subunit 2 (417 aa).

Positions 298, 358, and 361 each coordinate [4Fe-4S] cluster.

This sequence belongs to the aconitase/IPM isomerase family. LeuC type 2 subfamily. Heterodimer of LeuC and LeuD. [4Fe-4S] cluster serves as cofactor.

The enzyme catalyses (2R,3S)-3-isopropylmalate = (2S)-2-isopropylmalate. Its pathway is amino-acid biosynthesis; L-leucine biosynthesis; L-leucine from 3-methyl-2-oxobutanoate: step 2/4. In terms of biological role, catalyzes the isomerization between 2-isopropylmalate and 3-isopropylmalate, via the formation of 2-isopropylmaleate. This Thermotoga maritima (strain ATCC 43589 / DSM 3109 / JCM 10099 / NBRC 100826 / MSB8) protein is 3-isopropylmalate dehydratase large subunit 2.